The chain runs to 657 residues: Glycogen debranching enzyme (657 aa).

D336 functions as the Nucleophile in the catalytic mechanism. The Proton donor role is filled by E371. The disordered stretch occupies residues 460–479 (ANGEENRDGTNNNYSNNHGK).

This sequence belongs to the glycosyl hydrolase 13 family.

It catalyses the reaction Hydrolysis of (1-&gt;6)-alpha-D-glucosidic linkages to branches with degrees of polymerization of three or four glucose residues in limit dextrin.. It participates in glycan degradation; glycogen degradation. Its function is as follows. Removes maltotriose and maltotetraose chains that are attached by 1,6-alpha-linkage to the limit dextrin main chain, generating a debranched limit dextrin. This is Glycogen debranching enzyme from Escherichia coli O81 (strain ED1a).